A 62-amino-acid polypeptide reads, in one-letter code: Small ribosomal subunit protein eS27 (62 aa).

Zn(2+) contacts are provided by cysteine 17, cysteine 20, cysteine 36, and cysteine 39. A C4-type zinc finger spans residues 17–39; it reads CPDCENEQTIFDRACTPVDCIVC.

The protein belongs to the eukaryotic ribosomal protein eS27 family. In terms of assembly, part of the 30S ribosomal subunit. Requires Zn(2+) as cofactor.

The sequence is that of Small ribosomal subunit protein eS27 from Methanospirillum hungatei JF-1 (strain ATCC 27890 / DSM 864 / NBRC 100397 / JF-1).